A 137-amino-acid polypeptide reads, in one-letter code: Phosphoribosyl-AMP cyclohydrolase (137 aa).

Asp-84 provides a ligand contact to Mg(2+). Cys-85 provides a ligand contact to Zn(2+). Positions 86 and 88 each coordinate Mg(2+). Positions 101 and 108 each coordinate Zn(2+).

It belongs to the PRA-CH family. In terms of assembly, homodimer. The cofactor is Mg(2+). Requires Zn(2+) as cofactor.

Its subcellular location is the cytoplasm. It catalyses the reaction 1-(5-phospho-beta-D-ribosyl)-5'-AMP + H2O = 1-(5-phospho-beta-D-ribosyl)-5-[(5-phospho-beta-D-ribosylamino)methylideneamino]imidazole-4-carboxamide. Its pathway is amino-acid biosynthesis; L-histidine biosynthesis; L-histidine from 5-phospho-alpha-D-ribose 1-diphosphate: step 3/9. Catalyzes the hydrolysis of the adenine ring of phosphoribosyl-AMP. In Chlorobaculum tepidum (strain ATCC 49652 / DSM 12025 / NBRC 103806 / TLS) (Chlorobium tepidum), this protein is Phosphoribosyl-AMP cyclohydrolase.